Reading from the N-terminus, the 129-residue chain is Small ribosomal subunit protein uS11 (129 aa).

This sequence belongs to the universal ribosomal protein uS11 family. Part of the 30S ribosomal subunit. Interacts with proteins S7 and S18. Binds to IF-3.

Its function is as follows. Located on the platform of the 30S subunit, it bridges several disparate RNA helices of the 16S rRNA. Forms part of the Shine-Dalgarno cleft in the 70S ribosome. This is Small ribosomal subunit protein uS11 from Francisella tularensis subsp. tularensis (strain FSC 198).